A 578-amino-acid polypeptide reads, in one-letter code: Glycosyltransferase family 92 protein RCOM_0530710 (578 aa).

A helical membrane pass occupies residues 21-43 (SFFSVRSLTACLSFFVFLLFISS). Residues 295–531 (YELCACTMLW…QNQGSKDRAP (237 aa)) form the GT92 domain.

Belongs to the glycosyltransferase 92 family.

The protein resides in the membrane. The polypeptide is Glycosyltransferase family 92 protein RCOM_0530710 (Ricinus communis (Castor bean)).